We begin with the raw amino-acid sequence, 436 residues long: UBX domain-containing protein 7 (436 aa).

A Glycyl lysine isopeptide (Lys-Gly) (interchain with G-Cter in ubiquitin) cross-link involves residue lysine 19. The segment at 115-141 is disordered; it reads AGESSSRETNPGLAREEKSSRDVHRKN. One can recognise a UBX domain in the interval 212–290; the sequence is LHSSKCVLQI…ELTPRSALLL (79 aa). Residues 325–346 show a composition bias toward basic and acidic residues; the sequence is DKDPEVTSQREETSKPNRHEVR. 2 disordered regions span residues 325–357 and 371–436; these read DKDP…AASS and SSAH…EDKK. Residues 347-357 are compositionally biased toward low complexity; the sequence is SSTPLSGAASS. Over residues 371 to 408 the composition is skewed to polar residues; the sequence is SSAHASPMLTPSGTRYPSETNLTTSRSVSPNVFQFVNN. Position 388 is a phosphoserine (serine 388). Positions 426 to 436 are enriched in basic and acidic residues; it reads HLEKKKDEDKK.

Interacts with CDC48.

Its subcellular location is the endoplasmic reticulum. Functionally, involved in CDC48-dependent protein degradation through the ubiquitin/proteasome pathway. This is UBX domain-containing protein 7 (UBX7) from Saccharomyces cerevisiae (strain ATCC 204508 / S288c) (Baker's yeast).